We begin with the raw amino-acid sequence, 517 residues long: Endoglucanase A (517 aa).

The N-terminal stretch at 1-25 is a signal peptide; that stretch reads MKRSLLKTCSIIAGATIIFSSLSIS. Catalysis depends on E185, which acts as the Proton donor. E309 acts as the Nucleophile in catalysis. Basic and acidic residues predominate over residues 382–392; sequence HPEATEDDKPS. Positions 382-424 are disordered; that stretch reads HPEATEDDKPSTDVTNPDSGNTKPDSGNTNPGTETTTPTDNEK. Positions 393-407 are enriched in polar residues; that stretch reads TDVTNPDSGNTKPDS. The segment covering 408–420 has biased composition (low complexity); the sequence is GNTNPGTETTTPT. The 102-residue stretch at 416-517 folds into the CBM2 domain; that stretch reads TTTPTDNEKI…VISNFEYKFD (102 aa).

Belongs to the glycosyl hydrolase 5 (cellulase A) family.

The enzyme catalyses Endohydrolysis of (1-&gt;4)-beta-D-glucosidic linkages in cellulose, lichenin and cereal beta-D-glucans.. Hydrolyzes barley beta-glucan, lichenan, carboxymethylcellulose and xylan. It shows preferential activity against the larger cellooligosaccharides (cellohexaose and cellopentaose); cellotetraose is the smallest substrate degraded completely. The sequence is that of Endoglucanase A (celA) from Clostridium longisporum.